Consider the following 271-residue polypeptide: MSELKLVVAGAAGRMGRVLIQTAIETSGVTVSAALARPGSLALGQDAGLLAGCGEINVPITEDALAAIVDADGILDFTSPDLSVELAALAAQARIVHIIGTTGFSVAHLTKIEAAARHAVIVRSGNMSLGVNLLAALVKKTAAVLGPVYDIEIAEMHHRMKVDAPSGTALLLGEAAAQGRGISLSEHEQRGRDGHTGPRKDGDIGFVSLRGGTVVGDHTVIFAGPGERIELAHRAEDRRIFGRGAVQAALWGKGRKPGLYSMLDVLGLGGE.

Residue 10–15 coordinates NAD(+); that stretch reads GAAGRM. NADP(+) is bound at residue Arg37. Residues 100 to 102 and 124 to 127 each bind NAD(+); these read GTT and SGNM. The active-site Proton donor/acceptor is the His157. His158 provides a ligand contact to (S)-2,3,4,5-tetrahydrodipicolinate. Lys161 (proton donor) is an active-site residue. Residue 167–168 participates in (S)-2,3,4,5-tetrahydrodipicolinate binding; the sequence is GT. The tract at residues 183 to 202 is disordered; it reads SLSEHEQRGRDGHTGPRKDG. Positions 185–202 are enriched in basic and acidic residues; sequence SEHEQRGRDGHTGPRKDG.

This sequence belongs to the DapB family.

The protein resides in the cytoplasm. The catalysed reaction is (S)-2,3,4,5-tetrahydrodipicolinate + NAD(+) + H2O = (2S,4S)-4-hydroxy-2,3,4,5-tetrahydrodipicolinate + NADH + H(+). It carries out the reaction (S)-2,3,4,5-tetrahydrodipicolinate + NADP(+) + H2O = (2S,4S)-4-hydroxy-2,3,4,5-tetrahydrodipicolinate + NADPH + H(+). It participates in amino-acid biosynthesis; L-lysine biosynthesis via DAP pathway; (S)-tetrahydrodipicolinate from L-aspartate: step 4/4. Its function is as follows. Catalyzes the conversion of 4-hydroxy-tetrahydrodipicolinate (HTPA) to tetrahydrodipicolinate. This Beijerinckia indica subsp. indica (strain ATCC 9039 / DSM 1715 / NCIMB 8712) protein is 4-hydroxy-tetrahydrodipicolinate reductase.